Consider the following 131-residue polypeptide: Mediator of RNA polymerase II transcription subunit 31 (131 aa).

Ala2 carries the N-acetylalanine modification.

The protein belongs to the Mediator complex subunit 31 family. Component of the Mediator complex, which is composed of MED1, MED4, MED6, MED7, MED8, MED9, MED10, MED11, MED12, MED13, MED13L, MED14, MED15, MED16, MED17, MED18, MED19, MED20, MED21, MED22, MED23, MED24, MED25, MED26, MED27, MED29, MED30, MED31, CCNC, CDK8 and CDC2L6/CDK11. The MED12, MED13, CCNC and CDK8 subunits form a distinct module termed the CDK8 module. Mediator containing the CDK8 module is less active than Mediator lacking this module in supporting transcriptional activation. Individual preparations of the Mediator complex lacking one or more distinct subunits have been variously termed ARC, CRSP, DRIP, PC2, SMCC and TRAP.

It localises to the nucleus. Its function is as follows. Component of the Mediator complex, a coactivator involved in the regulated transcription of nearly all RNA polymerase II-dependent genes. Mediator functions as a bridge to convey information from gene-specific regulatory proteins to the basal RNA polymerase II transcription machinery. Mediator is recruited to promoters by direct interactions with regulatory proteins and serves as a scaffold for the assembly of a functional preinitiation complex with RNA polymerase II and the general transcription factors. This Bos taurus (Bovine) protein is Mediator of RNA polymerase II transcription subunit 31 (MED31).